The primary structure comprises 619 residues: Hypermethylated in cancer 2 protein (619 aa).

The BTB domain maps to 46–109 (CDVIIMVENS…IYTGKLLPSD (64 aa)). Phosphoserine occurs at positions 166, 169, and 197. 2 disordered regions span residues 180-293 (DVRK…VGNS) and 307-426 (MDVE…GHTG). The segment covering 214–228 (LGLGGPAGGEMGLGG) has biased composition (gly residues). The binding to CtBP stretch occupies residues 247 to 249 (DLS). Polar residues predominate over residues 281-293 (APTSTSALPVGNS). Positions 337-357 (KKDWNKKEPVAGSPFDRRETG) are enriched in basic and acidic residues. Phosphoserine is present on residues serine 349 and serine 416. 5 consecutive C2H2-type zinc fingers follow at residues 446 to 468 (YVCIPCAKGFPSSEQLNAHVETH), 509 to 531 (FKCSVCEKTYKDPATLRQHEKTH), 537 to 559 (FPCNICGKMFTQRGTMTRHMRSH), 565 to 587 (FACDECGMRFTRQYRLTEHMRVH), and 593 to 615 (YECQLCGGKFTQQRNLISHLRMH).

Belongs to the krueppel C2H2-type zinc-finger protein family. Hic subfamily. Self-associates. Interacts with HIC1.

It is found in the nucleus. Functionally, transcriptional repressor. This Mus musculus (Mouse) protein is Hypermethylated in cancer 2 protein (Hic2).